The following is a 615-amino-acid chain: MWNDEDNNPYGAFDSEARLSESLHSTTIESPFNHDYPPPPSSHSSNPDISDFSQHPEASDDDEGDYVGQANRAGYSHKSVYDSRIEQLLYENPDMPILITDAGKNHEGGGSFIVYTIRTGDLEVRRRYSEFASLRQTLVSLHPTLIVPPIPEKHSMADYAAKPTKAKEDAGIIDLRKRMLAVFLNRCRRMKEIREDGVWWRFLDPNVSWSEVLHSHPASSVPKNNLKAPPLDPANPTPAHAWLPVPSASAKLKSTSGTSSSPNAEAPGPEILGRFPPESRKLSEKDLDPYFINFEASTRELELLLQGNMEKVNRRTLAHLSGLSADLMELGARYNGFSLSEQSPTVATAIERVGQAADTSYIETEELSLALGANFAEPMRESAQFASVVRSVLRYRVLKRVQEDMTRDELSKKKSLLESLERSEQEAKRIEQYLNRTSPQAPTKQRSLSTSSATSSQGGTDESRPSGEETASIDSDFPPTHAEHVSQRYPESGQTSPPAHRKTSSGTFVANKIFGRISHAVHGFVDVDPERTRRDHIGKTKESLVQLEQALGVSEKDVKDASAGVLQDLKRFQKDKEADLRRYMVAYARCHLNWARKNLETWTEAKDEVDKIEAR.

The disordered stretch occupies residues 1 to 71; the sequence is MWNDEDNNPY…DEGDYVGQAN (71 aa). The segment covering 42–53 has biased composition (low complexity); the sequence is SHSSNPDISDFS. Residues 93-210 form the PX domain; that stretch reads PDMPILITDA…RFLDPNVSWS (118 aa). A 1,2-diacyl-sn-glycero-3-phospho-(1D-myo-inositol-3-phosphate)-binding residues include Arg-127, Ser-129, Lys-153, and Arg-176. Disordered stretches follow at residues 218–277 and 432–504; these read ASSV…RFPP and QYLN…RKTS. Composition is skewed to polar residues over residues 252 to 263 and 434 to 446; these read LKSTSGTSSSPN and LNRT…TKQR. The segment covering 447–456 has biased composition (low complexity); sequence SLSTSSATSS.

It belongs to the sorting nexin family.

It is found in the endosome membrane. Its subcellular location is the endomembrane system. In terms of biological role, may be required for cytoplasm to vacuole transport (Cvt) and pexophagy. The chain is Sorting nexin-41 (snx41) from Emericella nidulans (strain FGSC A4 / ATCC 38163 / CBS 112.46 / NRRL 194 / M139) (Aspergillus nidulans).